A 478-amino-acid chain; its full sequence is PRAME family member 15 (478 aa).

One copy of the LRR 1; degenerate repeat lies at 99–126 (RWKLQVLDLQDVCENFWMVWSEAMAHGC). One copy of the LRR 2; degenerate repeat lies at 181 to 205 (HLCCKKLKILGMPFRNIRSILKMVN). The LRR 3; degenerate repeat unit spans residues 206 to 232 (LDCIQEVEVNCKWVLPILTQFTPYLGH). One copy of the LRR 4; degenerate repeat lies at 233-268 (MRNLQKLVLSHMDVSRYVSPEQKKEIVTQFTTQFLK). LRR repeat units lie at residues 269–294 (LRCL…LSCL), 295–326 (KTSL…SQLK), 327–347 (TLDL…QILL), 351–378 (AATL…ALSR), and 379–403 (CFEL…LLSH).

Belongs to the PRAME family.

The protein is PRAME family member 15 of Homo sapiens (Human).